A 227-amino-acid chain; its full sequence is General transcription factor 3C polypeptide 6 (227 aa).

The disordered stretch occupies residues 157–227 (DEAAGPASDK…DGNVSQNNQS (71 aa)). Positions 186 to 195 (EQEKVEHSEV) are enriched in basic and acidic residues. The span at 203-227 (ETPSEMESSVFMGTQDGNVSQNNQS) shows a compositional bias: polar residues.

This sequence belongs to the TFIIIC subunit 6 family. In terms of assembly, part of the TFIIIC subcomplex TFIIIC2, consisting of six subunits, GTF3C1, GTF3C2, GTF3C3, GTF3C4, GTF3C5 and GTF3C6. Interacts with GTF3C4 and GTF3C5.

It is found in the nucleus. Involved in RNA polymerase III-mediated transcription. Integral, tightly associated component of the DNA-binding TFIIIC2 subcomplex that directly binds tRNA and virus-associated RNA promoters. This chain is General transcription factor 3C polypeptide 6, found in Mus musculus (Mouse).